The following is a 54-amino-acid chain: Potassium channel toxin alpha-KTx 14.3 (54 aa).

Positions 1–23 (MKIFFAILLILAVCSMAIWTVNG) are cleaved as a signal peptide.

The protein belongs to the short scorpion toxin superfamily. Potassium channel inhibitor family. Alpha-KTx 14 subfamily. Contains 3 disulfide bridges. As to expression, expressed by the venom gland.

Its subcellular location is the secreted. In terms of biological role, potential blocker of potassium channels. The polypeptide is Potassium channel toxin alpha-KTx 14.3 (Olivierus martensii (Manchurian scorpion)).